We begin with the raw amino-acid sequence, 185 residues long: uncharacterized protein (185 aa).

The interval 160–185 (QYTGPAVPSVPTTNLNDIGDPTKTVQ) is disordered.

This is an uncharacterized protein from Saccharomyces cerevisiae (strain ATCC 204508 / S288c) (Baker's yeast).